Reading from the N-terminus, the 287-residue chain is Pyridoxal 5'-phosphate synthase subunit PdxS (287 aa).

Position 21 (aspartate 21) interacts with D-ribose 5-phosphate. Lysine 78 serves as the catalytic Schiff-base intermediate with D-ribose 5-phosphate. Glycine 150 lines the D-ribose 5-phosphate pocket. Arginine 162 is a D-glyceraldehyde 3-phosphate binding site. Residues glycine 211 and 232-233 (GS) contribute to the D-ribose 5-phosphate site.

It belongs to the PdxS/SNZ family. In terms of assembly, in the presence of PdxT, forms a dodecamer of heterodimers.

The enzyme catalyses aldehydo-D-ribose 5-phosphate + D-glyceraldehyde 3-phosphate + L-glutamine = pyridoxal 5'-phosphate + L-glutamate + phosphate + 3 H2O + H(+). It participates in cofactor biosynthesis; pyridoxal 5'-phosphate biosynthesis. Its function is as follows. Catalyzes the formation of pyridoxal 5'-phosphate from ribose 5-phosphate (RBP), glyceraldehyde 3-phosphate (G3P) and ammonia. The ammonia is provided by the PdxT subunit. Can also use ribulose 5-phosphate and dihydroxyacetone phosphate as substrates, resulting from enzyme-catalyzed isomerization of RBP and G3P, respectively. This chain is Pyridoxal 5'-phosphate synthase subunit PdxS, found in Francisella philomiragia subsp. philomiragia (strain ATCC 25017 / CCUG 19701 / FSC 153 / O#319-036).